The primary structure comprises 500 residues: Na(+)/H(+) antiporter NhaB (500 aa).

12 consecutive transmembrane segments (helical) span residues 28–50 (FLLS…VLVG), 68–88 (GGLL…ALYA), 98–118 (LLLM…LLLF), 121–141 (LLLG…LAAL), 145–165 (FLDA…FFAV), 205–225 (LLMH…VGEP), 244–264 (QVAP…VALE), 301–318 (ALLV…GLAL), 350–370 (FQEA…VAVI), 394–414 (MLFI…VATI), 449–469 (VATP…IAPL), and 477–497 (MVWM…WAVS).

This sequence belongs to the NhaB Na(+)/H(+) (TC 2.A.34) antiporter family.

It is found in the cell inner membrane. It carries out the reaction 2 Na(+)(in) + 3 H(+)(out) = 2 Na(+)(out) + 3 H(+)(in). Functionally, na(+)/H(+) antiporter that extrudes sodium in exchange for external protons. This Pseudomonas paraeruginosa (strain DSM 24068 / PA7) (Pseudomonas aeruginosa (strain PA7)) protein is Na(+)/H(+) antiporter NhaB.